The following is a 383-amino-acid chain: Vesicle-associated membrane protein-associated protein scs2 (383 aa).

The 123-residue stretch at 1–123 (MSVECSGELF…SIFDRKIRCV (123 aa)) folds into the MSP domain. The Cytoplasmic portion of the chain corresponds to 1-362 (MSVECSGELF…TGASLTESPG (362 aa)). Over residues 127–146 (KQPPQSADKQVENTSTSNPP) the composition is skewed to polar residues. Disordered regions lie at residues 127–160 (KQPP…SSVG) and 233–359 (ESAS…SLTE). S236, S237, S259, S261, and S268 each carry phosphoserine. Basic and acidic residues predominate over residues 241–263 (DVARSKVQDIIDNEIPKPSESPR). The segment covering 289–300 (FDTKKNDFDSKL) has biased composition (basic and acidic residues). Residues 347 to 359 (ADPSSSTGASLTE) show a composition bias toward polar residues. Residues 363–383 (IPPNIVIILCLIFFLIGYLFF) form a helical; Anchor for type IV membrane protein membrane-spanning segment.

It belongs to the VAMP-associated protein (VAP) (TC 9.B.17) family. In terms of assembly, interacts (via MSP domain) with duc1 (via FFAT-motif); the interaction is direct and serves to restrict the localization of duc1 to areas of cell membrane-endoplasmic reticulum contact sites, and away from the cell division site. Interacts with epr1.

It is found in the endoplasmic reticulum membrane. In terms of biological role, vesicle-associated membrane protein-associated protein (VAP) implicated in maintaining the cortical endoplasmic reticulum (ER)-plasma membrane (PM) attachment. ER-PM contacts function to modulate the distribution of contractile ring components to ensure robust ring assembly. ER-PM contacts function also in controlling exocytosis and maintenance of cell polarity regulating cell shape. VAPs play an important role in regulating eisosome assembly. VAPs also contribute to ER-phagy by tethering atg8 to the ER membrane, but also by maintaining the ER-plasma membrane contact. Restricts the localization of duc1 away from the site of cell division. The polypeptide is Vesicle-associated membrane protein-associated protein scs2 (scs2) (Schizosaccharomyces pombe (strain 972 / ATCC 24843) (Fission yeast)).